Here is a 380-residue protein sequence, read N- to C-terminus: Kappa-type opioid receptor (380 aa).

The Extracellular segment spans residues 1 to 57 (MEPPVQIFRGEPGPTCSPSTCLPPNGSGWFPGWAEPDGNGSAGSEDVLLEPAHISPV). N-linked (GlcNAc...) asparagine glycosylation is found at Asn25 and Asn39. The helical transmembrane segment at 58-85 (ILVIITAVYSVVFVVGLVGNSLVMFVII) threads the bilayer. Over 86–95 (RYTKMKTATN) the chain is Cytoplasmic. Residues 96-119 (IYIFNLALADALVTTTMPFQSTVY) form a helical membrane-spanning segment. At 120–132 (LMNSWPFGDVLCK) the chain is on the extracellular side. A disulfide bridge links Cys131 with Cys210. A helical membrane pass occupies residues 133–154 (VVISIDYYNMFTSIFTLTMMSV). The Cytoplasmic portion of the chain corresponds to 155-173 (DRYIAVCHPVKALDFRTPL). The chain crosses the membrane as a helical span at residues 174-196 (KAKIINICIWILSSSVGISAIVL). The Extracellular segment spans residues 197 to 222 (GGTKVREDMEVIECSLQFPDDDYSWW). A helical transmembrane segment spans residues 223–247 (DLFMKVCVFVFAFVIPVLIIIVCYT). The Cytoplasmic segment spans residues 248 to 274 (LMILRLKSVRLLSGSREKDRNLRRITR). Residues 275 to 296 (LVLVVVAVFVVCWTPIHIFILV) traverse the membrane as a helical segment. Residues 297–311 (EALGSTAHSTAALSS) are Extracellular-facing. The chain crosses the membrane as a helical span at residues 312-333 (YYFCIALGYTNSSLNPILYAFL). The Cytoplasmic segment spans residues 334–380 (DENFKRCFRDFCFPIKMRMERQSTSRVRNTVQDPAYVREVDGVNKPV). Cys345 is lipidated: S-palmitoyl cysteine.

The protein belongs to the G-protein coupled receptor 1 family. Interacts with NHERF1. Interacts with GABARAPL1.

The protein localises to the cell membrane. In terms of biological role, G-protein coupled opioid receptor that functions as a receptor for endogenous alpha-neoendorphins and dynorphins, but has low affinity for beta-endorphins. Also functions as a receptor for various synthetic opioids and for the psychoactive diterpene salvinorin A. Ligand binding causes a conformation change that triggers signaling via guanine nucleotide-binding proteins (G proteins) and modulates the activity of down-stream effectors, such as adenylate cyclase. Signaling leads to the inhibition of adenylate cyclase activity. Inhibits neurotransmitter release by reducing calcium ion currents and increasing potassium ion conductance. Plays a role in the perception of pain. Plays a role in mediating reduced physical activity upon treatment with synthetic opioids. Plays a role in the regulation of salivation in response to synthetic opioids. May play a role in arousal and regulation of autonomic and neuroendocrine functions. The protein is Kappa-type opioid receptor (OPRK1) of Bos taurus (Bovine).